The chain runs to 335 residues: Ketol-acid reductoisomerase (NADP(+)) (335 aa).

In terms of domain architecture, KARI N-terminal Rossmann spans 1 to 182; sequence MATIIYDDET…GATRAGVYET (182 aa). NADP(+)-binding positions include 25–28, arginine 48, serine 51, serine 53, and 83–86; these read YGSQ and DEKQ. Histidine 108 is an active-site residue. Residue glycine 134 coordinates NADP(+). Residues 183–328 enclose the KARI C-terminal knotted domain; that stretch reads TFREETETDL…KQIRANIPWL (146 aa). Positions 191, 195, 227, and 231 each coordinate Mg(2+). Position 252 (serine 252) interacts with substrate.

Belongs to the ketol-acid reductoisomerase family. Mg(2+) is required as a cofactor.

The catalysed reaction is (2R)-2,3-dihydroxy-3-methylbutanoate + NADP(+) = (2S)-2-acetolactate + NADPH + H(+). It carries out the reaction (2R,3R)-2,3-dihydroxy-3-methylpentanoate + NADP(+) = (S)-2-ethyl-2-hydroxy-3-oxobutanoate + NADPH + H(+). It participates in amino-acid biosynthesis; L-isoleucine biosynthesis; L-isoleucine from 2-oxobutanoate: step 2/4. It functions in the pathway amino-acid biosynthesis; L-valine biosynthesis; L-valine from pyruvate: step 2/4. Its function is as follows. Involved in the biosynthesis of branched-chain amino acids (BCAA). Catalyzes an alkyl-migration followed by a ketol-acid reduction of (S)-2-acetolactate (S2AL) to yield (R)-2,3-dihydroxy-isovalerate. In the isomerase reaction, S2AL is rearranged via a Mg-dependent methyl migration to produce 3-hydroxy-3-methyl-2-ketobutyrate (HMKB). In the reductase reaction, this 2-ketoacid undergoes a metal-dependent reduction by NADPH to yield (R)-2,3-dihydroxy-isovalerate. This is Ketol-acid reductoisomerase (NADP(+)) from Methanosarcina mazei (strain ATCC BAA-159 / DSM 3647 / Goe1 / Go1 / JCM 11833 / OCM 88) (Methanosarcina frisia).